Reading from the N-terminus, the 471-residue chain is MEPEISDTKVTARFTTRDENLHLPDQDRTLLISTNLKRVNLSKILNELLGREDDRIPFDILINGQFLRTTVDEYLTKNGINAETRLEVEYTRALVPPLNVTSFEHDDWVSAVDVLSQTSRAGAWSGGSVQSGQERILSASYDGLVRVWNTSGDVLATSEAPNNGGRITSLKSAKWLSDKKIVAAGMDNTVRVFKYDEDTRTITTSLELFSHRWGVEDVAVHGPSSRILSASSDNTISLFSSNAKENPVAPSSLLPNSTAASNKRQKLSKPDRTVPARGALTTFTGHSSPVSSVIFKPDDATVAYSASHDHTLKTWDLPTAQCVDTRTTGHSLLSLCAIPSRNLIATGTSARHITLIDPRVSATQISVMTLRGHKNGVVSLDTDPSSDHGLVSGSHDGTVQIWDLRNVTTGGQVGEGQQGESVHTIHRQGQSGPGKGHGEGVKVFGVRWDKDVGIVSGGEDKKIQINRALGS.

The segment at 10-92 (VTARFTTRDE…ETRLEVEYTR (83 aa)) is ubiquitin-like (UBL) domain. WD repeat units follow at residues 119–158 (SRAG…LATS), 165–203 (GRIT…RTIT), and 210–249 (SHRW…NPVA). The interval 245–274 (ENPVAPSSLLPNSTAASNKRQKLSKPDRTV) is disordered. The segment covering 253 to 262 (LLPNSTAASN) has biased composition (polar residues). WD repeat units follow at residues 285–325 (GHSS…CVDT), 327–366 (TTGH…TQIS), 372–412 (GHKN…TGGQ), and 436–471 (GHGE…ALGS). The segment at 412–440 (QVGEGQQGESVHTIHRQGQSGPGKGHGEG) is disordered.

Belongs to the WD repeat WDR12/YTM1 family. Component of the NOP7 complex, composed of ERB1, NOP7 and YTM1. The complex is held together by ERB1, which interacts with NOP7 via its N-terminal domain and with YTM1 via a high-affinity interaction between the seven-bladed beta-propeller domains of the 2 proteins. The NOP7 complex associates with the 66S pre-ribosome. Interacts (via UBL domain) with MDN1 (via VWFA/MIDAS domain).

It localises to the nucleus. The protein localises to the nucleolus. The protein resides in the nucleoplasm. Functionally, component of the NOP7 complex, which is required for maturation of the 25S and 5.8S ribosomal RNAs and formation of the 60S ribosome. The chain is Ribosome biogenesis protein YTM1 from Phaeosphaeria nodorum (strain SN15 / ATCC MYA-4574 / FGSC 10173) (Glume blotch fungus).